We begin with the raw amino-acid sequence, 429 residues long: MLLGPASGSPSPLLASLTLPARPLQPPLDLKHLLAFHLNGTTPLSLFPNFSTMDPVQKAVISHTFGVPSPLKKKLFISCNICHLRFNSANQAEAHYKGHRHARKLKAVEAAKSKQRPRNPTTNGTVVSSASPPASGSPGTPQSKGPASPPLGPSLQLPPTPDPSAGDPVHSAGDPVHSELCDAAASSSSSSCPPCSPDPSREAPGPEPAEGAVGSGVNGEGRGEKGRLYCPTCKVTVNSASQLQAHNTGAKHRWMVEGHQGAPRRGRGRPVSRGGTGHKTKRVIGNRGGRQGPSPPFHCALCQLHVNSETQLKQHMSSRRHKDRLAGKPPKSSSQHNKLQKHTALAVSVLKSKLALQKQLTKTLAARFLPGPLPTTAAAICALPGPLTLRPAATAAATLFPAPVLGPALFRSPAGAVRPAAGPILFAPY.

A Matrin-type 1 zinc finger spans residues 77-107 (ISCNICHLRFNSANQAEAHYKGHRHARKLKA). Disordered regions lie at residues 109–224 (EAAK…GRGE), 258–295 (GHQGAPRRGRGRPVSRGGTGHKTKRVIGNRGGRQGPSP), and 311–340 (QLKQHMSSRRHKDRLAGKPPKSSSQHNKLQ). The segment covering 125–146 (TVVSSASPPASGSPGTPQSKGP) has biased composition (low complexity). Positions 147–162 (ASPPLGPSLQLPPTPD) are enriched in pro residues. Positions 181 to 193 (CDAAASSSSSSCP) are enriched in low complexity. Residues 225-259 (KGRLYCPTCKVTVNSASQLQAHNTGAKHRWMVEGH) form a Matrin-type 2 zinc finger. Basic residues predominate over residues 262–284 (APRRGRGRPVSRGGTGHKTKRVI). Residues 297–327 (FHCALCQLHVNSETQLKQHMSSRRHKDRLAG) form a Matrin-type 3 zinc finger.

It is found in the nucleus. The protein is Zinc finger protein 385C of Mus musculus (Mouse).